We begin with the raw amino-acid sequence, 269 residues long: MYEAIGHRVEDGVAEITIKLPRHRNALSVKAMQEVTDALNRAEEDDSVGAVMITGAEDAFCAGFYLREIPLDKGVAGVRDHFRIGALWWHQMIHKIIRVKRPVLAAINGVAAGGGLGISLASDMAICADSAKFVCAWHTIGIGNDTATSYSLARIVGMRRAMELMLTNRTLYPEEAKDWGLVSRVYPKDDFREVAWKVARELAAAPTHLQVMAKERFHAGWMQPVEECTEFEIQNVIASVTHPHFMPCLTEFLDGHRADRPQVELPAGV.

Substrate-binding positions include Arg-24 and Ala-62–Arg-67. His-90 serves as the catalytic Proton acceptor. Residue Gly-114 participates in substrate binding. Catalysis depends on Asp-145, which acts as the Nucleophile. Position 257 (Arg-257) interacts with substrate.

Belongs to the enoyl-CoA hydratase/isomerase family. Homotetramer. Homotetramer, homooctamer and larger multimers. Homotrimer.

It carries out the reaction 4-chlorobenzoyl-CoA + H2O = 4-hydroxybenzoyl-CoA + chloride + H(+). The protein operates within xenobiotic degradation; 4-chlorobenzoate degradation; 4-hydroxybenzoate from 4-chlorobenzoate: step 2/3. With respect to regulation, inactivated by 1 mM Ag(+) and by 5 mM Cu(2+). Partially inhibited by 5 mM Zn(2+), Mn(2+), Co(2+), Fe(2+) and Ni(2+). Unaffected by 10 mM Na(+), K(+) and Li(+) and by 0.5 mM Mg(2+), Mn(2+), Fe(2+), Ca(2+), Co(2+) and Zn(2+). Inhibited by the sulfhydryl blocking agent 5,5'-dithio-bis-(2-nitrobenzoate), SDS and N-bromosuccinimide. Unaffected by sodium azide and EDTA. Inactivated following treatment with diethyl pyrocarbonate; this inactivation is reversible by treatment with hydroxylamine. Its function is as follows. Dehalogenates 4-chlorobenzoyl-CoA, 4-iodobenzoyl-CoA and 4-bromobenzoyl-CoA, but not 4-fluorobenzoyl-CoA. Inactive towards crotonyl-CoA, alpha-methylcrotonyl-CoA and beta-methylcrotonyl-CoA. The protein is 4-chlorobenzoyl coenzyme A dehalogenase of Pseudomonas sp. (strain CBS-3).